The sequence spans 473 residues: Glutamate--tRNA ligase (473 aa).

A 'HIGH' region motif is present at residues 10–20; it reads PSPTGYLHLGN. The Zn(2+) site is built by C98, C100, C125, and H127. Residues 242–246 carry the 'KMSKS' region motif; that stretch reads KLSKR. Residue K245 participates in ATP binding.

The protein belongs to the class-I aminoacyl-tRNA synthetase family. Glutamate--tRNA ligase type 1 subfamily. In terms of assembly, monomer. Requires Zn(2+) as cofactor.

The protein resides in the cytoplasm. It carries out the reaction tRNA(Glu) + L-glutamate + ATP = L-glutamyl-tRNA(Glu) + AMP + diphosphate. Its function is as follows. Catalyzes the attachment of glutamate to tRNA(Glu) in a two-step reaction: glutamate is first activated by ATP to form Glu-AMP and then transferred to the acceptor end of tRNA(Glu). The chain is Glutamate--tRNA ligase from Aquifex aeolicus (strain VF5).